Consider the following 325-residue polypeptide: MRIRKNITKFIKRAYIDMGELKQVKGYTKTRLNIISNKVFLLKQELYPLKKQKKVGKLKKKRVTTYTRKKLKRILSLLFRIGGKIYRRKIKKKKINLKKKEEHFTNNLILYRLFRKFYINLKLKQFKRLYKKYKGNEKIIIQQLEKRIDMILLRSGFVRSIYEARQLINHKHILVNGNIARIPSYTLNVGDIISIKEGSHKQNLIHRLKKILLPKVVPEHKKNLIHRFVSKGMDKYKYNYKQKYQPNDKAKYQQNYKYQAKRRRESKKKRRIRATGPKYLEISHALLLISLIEEPKLTAIKYPFTLQPENNIKFISLLNKYKRIR.

In terms of domain architecture, S4 RNA-binding spans 146-209 (KRIDMILLRS…HKQNLIHRLK (64 aa)).

The protein belongs to the universal ribosomal protein uS4 family.

It localises to the mitochondrion. The polypeptide is Small ribosomal subunit protein uS4m (mrps4) (Dictyostelium citrinum (Slime mold)).